Reading from the N-terminus, the 66-residue chain is Cytoplasmic envelopment protein 3 (66 aa).

Gly-2 carries the N-myristoyl glycine; by host lipid modification.

This sequence belongs to the herpesviridae cytoplasmic envelopment protein 3 family. In terms of assembly, interacts with cytoplasmic envelopment protein 2; this interaction is essential for the proper localization of each protein to the assembly complex and thus for the production of infectious virus. In terms of processing, phosphorylated. Phosphorylation does not seem to be required for recycling to the host Golgi apparatus. Packaging is selective for underphosphorylated forms.

The protein localises to the virion tegument. It is found in the virion membrane. It localises to the host cell membrane. Its subcellular location is the host Golgi apparatus membrane. In terms of biological role, plays an important role in the cytoplasmic envelopment of tegument proteins and capsids during the assembly and egress processes. Also participates in viral entry at the fusion step probably by regulating the core fusion machinery. This chain is Cytoplasmic envelopment protein 3 (38), found in Saimiriine herpesvirus 2 (strain 11) (SaHV-2).